A 448-amino-acid polypeptide reads, in one-letter code: tRNA(Ile)-lysidine synthase (448 aa).

ATP is bound at residue 25–30; the sequence is SGGSDS.

It belongs to the tRNA(Ile)-lysidine synthase family.

It localises to the cytoplasm. It catalyses the reaction cytidine(34) in tRNA(Ile2) + L-lysine + ATP = lysidine(34) in tRNA(Ile2) + AMP + diphosphate + H(+). Its function is as follows. Ligates lysine onto the cytidine present at position 34 of the AUA codon-specific tRNA(Ile) that contains the anticodon CAU, in an ATP-dependent manner. Cytidine is converted to lysidine, thus changing the amino acid specificity of the tRNA from methionine to isoleucine. The sequence is that of tRNA(Ile)-lysidine synthase from Brucella melitensis biotype 2 (strain ATCC 23457).